The primary structure comprises 353 residues: Tsukushi (353 aa).

The first 17 residues, 1 to 17 (MLCTLFLLLLALGIVQT), serve as a signal peptide directing secretion. Positions 18-59 (TRPCFPGCQCEEETFGLFDSFSLIRVDCSSLGPHIVPVPIPL) constitute an LRRNT domain. LRR repeat units follow at residues 60–80 (DTAH…SVLG), 86–107 (TLAG…AFSR), 110–131 (YLES…VFTS), 133–154 (PLSD…AFTT), 160–180 (ALHV…PARA), 186–207 (TIQS…RDLP), 208–228 (LRYL…AFMG), 231–253 (GLTH…GFRE), 256–277 (GLQV…EVFS), and 281–302 (LLQE…LLHH). Asn75 carries N-linked (GlcNAc...) asparagine glycosylation. Asn138 carries an N-linked (GlcNAc...) asparagine glycan. Asn191 carries N-linked (GlcNAc...) asparagine glycosylation.

As to quaternary structure, interacts with FZD4 (via FZ domain); competes with WNT2B for binding to FZD4, inhibiting Wnt signaling and repressing peripheral eye development. Interacts with TGFB1; the interaction contributes to regulation of the hair cycle. Interacts with netrin. Interacts with CCN2. In terms of tissue distribution, expressed at high levels in the liver, small intestine and placenta. Not or barely detectable in other tissues, including whole pancreas, adipose tissues, skeletal muscle, kidney, spleen, brain, lung and testis.

It localises to the secreted. Its function is as follows. Contributes to various developmental events and other processes such as wound healing and cholesterol homeostasis through its interactions with multiple signaling pathways. Wnt signaling inhibitor which competes with WNT2B for binding to Wnt receptor FZD4 and represses WNT2B-dependent development of the peripheral eye. Plays a role in regulating the hair cycle by controlling TGFB1 signaling. Required for the development of the anterior commissure in the brain by inhibiting neurite outgrowth. Essential for terminal differentiation of hippocampal neural stem cells. Plays a role in regulating bone elongation and bone mass by modulating growth plate chondrocyte function and overall body size. Required for development of the inner ear through its involvement in stereocilia formation in inner hair cells. Facilitates wound healing by inhibiting secretion of TGFB1 from macrophages which prevents myofibroblast differentiation, maintaining inflammatory cell quiescence. Plays a role in cholesterol homeostasis by reducing circulating high-density lipoprotein cholesterol, lowering cholesterol efflux capacity and decreasing cholesterol-to-bile acid conversion in the liver. In one study, shown to negatively regulate sympathetic innervation in brown fat, leading to reduced energy expenditure. In another study, shown not to affect brown fat thermogenic capacity, body weight gain or glucose homeostasis. This Rattus norvegicus (Rat) protein is Tsukushi (Tsku).